A 124-amino-acid polypeptide reads, in one-letter code: Heat-labile enterotoxin B chain (124 aa).

An N-terminal signal peptide occupies residues 1-21 (MNKVKCYVLFTALLSSLCAYG). A disulfide bond links Cys30 and Cys107.

As to quaternary structure, heterohexamer of one A chain and of five B chains.

Functionally, the biological activity of the toxin is produced by the A chain, which activates intracellular adenyl cyclase. The polypeptide is Heat-labile enterotoxin B chain (eltB) (Escherichia coli O78:H11 (strain H10407 / ETEC)).